The following is a 254-amino-acid chain: Gamma-glutamyl-gamma-aminobutyrate hydrolase (254 aa).

Residues 16-250 (RNRLKGHATQ…ITAWQHHIAE (235 aa)) form the Glutamine amidotransferase type-1 domain. The active-site Nucleophile is the C114. Active-site residues include H222 and E224.

Belongs to the peptidase C26 family.

It catalyses the reaction 4-(gamma-L-glutamylamino)butanoate + H2O = 4-aminobutanoate + L-glutamate. It functions in the pathway amine and polyamine degradation; putrescine degradation; 4-aminobutanoate from putrescine: step 4/4. Involved in the breakdown of putrescine via hydrolysis of the gamma-glutamyl linkage of gamma-glutamyl-gamma-aminobutyrate. The protein is Gamma-glutamyl-gamma-aminobutyrate hydrolase (puuD) of Shigella flexneri.